A 408-amino-acid polypeptide reads, in one-letter code: Interferon-activable protein 203 (408 aa).

One can recognise a Pyrin domain in the interval 1-87; the sequence is MAEYKNIVLL…AKKLKTEKAK (87 aa). Residues 84 to 208 form a disordered region; it reads EKAKVQEKKK…EGHHQGPKQV (125 aa). Residues 92–102 are compositionally biased toward basic residues; it reads KKGKCKTAGKK. The span at 150-159 shows a compositional bias: polar residues; it reads AQLPETSGTN. In terms of domain architecture, HIN-200 spans 190–388; the sequence is TVPKEPSREE…SVRHSYMQVI (199 aa).

Belongs to the HIN-200 family. As to expression, constitutively expressed in the thymus, bone marrow and spleen. Isoform 1 and isoform 3 are present in liver (at protein level).

The protein resides in the nucleus. The protein is Interferon-activable protein 203 (Ifi203) of Mus musculus (Mouse).